A 292-amino-acid polypeptide reads, in one-letter code: MIKNLLNKRKYITVSSVELNDTELNEDEKPNIPSGMWSKCEKCAKILYTEDLRENFNVCPNCGHHFKLGAYERIKYLTDENTFVEFDKKMVGRNPLDFNGYEEKIKGYQKKSHVIEGVVTGEAYIAQRKVVLCVMDSNFMMGSMGTAVGEKITRAIEYATKNRLPLIIFTCSGGARMQEGIYSLMQMAKVSGAIYRHGRENLLYITVLTNPTTGGVTASFAMEGDIILSEPGCLVGFAGRRVIEGTINEKLPDDFQTAEFLLEKGFIDKIVQRKDLKQVITSLLRMHEVDYE.

Positions 36 to 292 constitute a CoA carboxyltransferase N-terminal domain; it reads MWSKCEKCAK…LLRMHEVDYE (257 aa). Zn(2+)-binding residues include C40, C43, C59, and C62. A C4-type zinc finger spans residues 40–62; that stretch reads CEKCAKILYTEDLRENFNVCPNC.

Belongs to the AccD/PCCB family. In terms of assembly, acetyl-CoA carboxylase is a heterohexamer composed of biotin carboxyl carrier protein (AccB), biotin carboxylase (AccC) and two subunits each of ACCase subunit alpha (AccA) and ACCase subunit beta (AccD). The cofactor is Zn(2+).

The protein resides in the cytoplasm. The catalysed reaction is N(6)-carboxybiotinyl-L-lysyl-[protein] + acetyl-CoA = N(6)-biotinyl-L-lysyl-[protein] + malonyl-CoA. It functions in the pathway lipid metabolism; malonyl-CoA biosynthesis; malonyl-CoA from acetyl-CoA: step 1/1. Functionally, component of the acetyl coenzyme A carboxylase (ACC) complex. Biotin carboxylase (BC) catalyzes the carboxylation of biotin on its carrier protein (BCCP) and then the CO(2) group is transferred by the transcarboxylase to acetyl-CoA to form malonyl-CoA. This Clostridium perfringens (strain ATCC 13124 / DSM 756 / JCM 1290 / NCIMB 6125 / NCTC 8237 / Type A) protein is Acetyl-coenzyme A carboxylase carboxyl transferase subunit beta.